Consider the following 208-residue polypeptide: Small ribosomal subunit protein uS9c (208 aa).

The transit peptide at 1-52 directs the protein to the chloroplast; it reads MASITNLASSLSSLSFSSQVSQRPNTISFPRANSVFALPAKSARRASLSITA.

Belongs to the universal ribosomal protein uS9 family.

It localises to the plastid. The protein resides in the chloroplast. Functionally, binds directly to 16S ribosomal RNA. The chain is Small ribosomal subunit protein uS9c (RPS9) from Arabidopsis thaliana (Mouse-ear cress).